A 506-amino-acid polypeptide reads, in one-letter code: Maturase K (506 aa).

Belongs to the intron maturase 2 family. MatK subfamily.

It is found in the plastid. It localises to the chloroplast. In terms of biological role, usually encoded in the trnK tRNA gene intron. Probably assists in splicing its own and other chloroplast group II introns. This chain is Maturase K, found in Erica tetralix (Cross-leaved heath).